Here is a 423-residue protein sequence, read N- to C-terminus: Glutamyl-tRNA(Gln) amidotransferase subunit A (423 aa).

Residues 1 to 20 are disordered; sequence MSHNAFITEETIEPTDDGPL. Residues 10–19 are compositionally biased toward acidic residues; the sequence is ETIEPTDDGP. Active-site charge relay system residues include lysine 28 and serine 103. A disordered region spans residues 75 to 108; sequence EFGMGTTTETSAFGPTENPAAEGRVPGGSSGGSA. Serine 127 serves as the catalytic Acyl-ester intermediate. Residues 183 to 206 are disordered; it reads DERDGTTREPPAGQPTYADAADGD.

This sequence belongs to the amidase family. GatA subfamily. In terms of assembly, heterotrimer of A, B and C subunits.

It carries out the reaction L-glutamyl-tRNA(Gln) + L-glutamine + ATP + H2O = L-glutaminyl-tRNA(Gln) + L-glutamate + ADP + phosphate + H(+). Its function is as follows. Allows the formation of correctly charged Gln-tRNA(Gln) through the transamidation of misacylated Glu-tRNA(Gln) in organisms which lack glutaminyl-tRNA synthetase. The reaction takes place in the presence of glutamine and ATP through an activated gamma-phospho-Glu-tRNA(Gln). The sequence is that of Glutamyl-tRNA(Gln) amidotransferase subunit A from Natronomonas pharaonis (strain ATCC 35678 / DSM 2160 / CIP 103997 / JCM 8858 / NBRC 14720 / NCIMB 2260 / Gabara) (Halobacterium pharaonis).